Here is a 92-residue protein sequence, read N- to C-terminus: Small ribosomal subunit protein uS19 (92 aa).

This sequence belongs to the universal ribosomal protein uS19 family.

In terms of biological role, protein S19 forms a complex with S13 that binds strongly to the 16S ribosomal RNA. The polypeptide is Small ribosomal subunit protein uS19 (Francisella tularensis subsp. tularensis (strain FSC 198)).